The primary structure comprises 28 residues: Cytochrome b6-f complex subunit 6 (28 aa).

Residues Val-2–Leu-22 form a helical membrane-spanning segment.

This sequence belongs to the PetL family. As to quaternary structure, the 4 large subunits of the cytochrome b6-f complex are cytochrome b6, subunit IV (17 kDa polypeptide, PetD), cytochrome f and the Rieske protein, while the 4 small subunits are PetG, PetL, PetM and PetN. The complex functions as a dimer.

The protein localises to the plastid. Its subcellular location is the cyanelle thylakoid membrane. In terms of biological role, component of the cytochrome b6-f complex, which mediates electron transfer between photosystem II (PSII) and photosystem I (PSI), cyclic electron flow around PSI, and state transitions. PetL is important for photoautotrophic growth as well as for electron transfer efficiency and stability of the cytochrome b6-f complex. The protein is Cytochrome b6-f complex subunit 6 of Cyanophora paradoxa.